The following is a 347-amino-acid chain: Druantia protein DruD (347 aa).

The protein resides in the cytoplasm. Functionally, component of antiviral defense system Druantia type I, composed of DruA, DruB, DruC, DruD and DruE. Expression of Druantia in E.coli (strain MG1655) confers resistance to phage lambda, SECphi18, SECphi27 and T4. This Escherichia coli (strain UMEA 4076-1) protein is Druantia protein DruD.